The primary structure comprises 427 residues: UDP-N-acetylglucosamine 1-carboxyvinyltransferase 1 (427 aa).

Residue Lys24–Asn25 participates in phosphoenolpyruvate binding. UDP-N-acetyl-alpha-D-glucosamine is bound at residue Arg97. The Proton donor role is filled by Cys121. Residue Cys121 is modified to 2-(S-cysteinyl)pyruvic acid O-phosphothioketal. Residues Arg126 to Leu130, Asp309, and Val331 contribute to the UDP-N-acetyl-alpha-D-glucosamine site.

It belongs to the EPSP synthase family. MurA subfamily.

It localises to the cytoplasm. The enzyme catalyses phosphoenolpyruvate + UDP-N-acetyl-alpha-D-glucosamine = UDP-N-acetyl-3-O-(1-carboxyvinyl)-alpha-D-glucosamine + phosphate. The protein operates within cell wall biogenesis; peptidoglycan biosynthesis. In terms of biological role, cell wall formation. Adds enolpyruvyl to UDP-N-acetylglucosamine. This is UDP-N-acetylglucosamine 1-carboxyvinyltransferase 1 from Lactococcus lactis subsp. lactis (strain IL1403) (Streptococcus lactis).